Consider the following 280-residue polypeptide: 3-methyl-2-oxobutanoate hydroxymethyltransferase (280 aa).

The Mg(2+) site is built by aspartate 49 and aspartate 88. 3-methyl-2-oxobutanoate is bound by residues 49–50 (DS), aspartate 88, and lysine 118. Position 120 (glutamate 120) interacts with Mg(2+). Glutamate 186 functions as the Proton acceptor in the catalytic mechanism.

Belongs to the PanB family. As to quaternary structure, homodecamer; pentamer of dimers. Requires Mg(2+) as cofactor.

It localises to the cytoplasm. The enzyme catalyses 3-methyl-2-oxobutanoate + (6R)-5,10-methylene-5,6,7,8-tetrahydrofolate + H2O = 2-dehydropantoate + (6S)-5,6,7,8-tetrahydrofolate. The protein operates within cofactor biosynthesis; (R)-pantothenate biosynthesis; (R)-pantoate from 3-methyl-2-oxobutanoate: step 1/2. Its function is as follows. Catalyzes the reversible reaction in which hydroxymethyl group from 5,10-methylenetetrahydrofolate is transferred onto alpha-ketoisovalerate to form ketopantoate. The polypeptide is 3-methyl-2-oxobutanoate hydroxymethyltransferase (Ruegeria sp. (strain TM1040) (Silicibacter sp.)).